Reading from the N-terminus, the 254-residue chain is Imidazole glycerol phosphate synthase subunit HisF (254 aa).

Catalysis depends on residues Asp12 and Asp131.

The protein belongs to the HisA/HisF family. Heterodimer of HisH and HisF.

It is found in the cytoplasm. It carries out the reaction 5-[(5-phospho-1-deoxy-D-ribulos-1-ylimino)methylamino]-1-(5-phospho-beta-D-ribosyl)imidazole-4-carboxamide + L-glutamine = D-erythro-1-(imidazol-4-yl)glycerol 3-phosphate + 5-amino-1-(5-phospho-beta-D-ribosyl)imidazole-4-carboxamide + L-glutamate + H(+). Its pathway is amino-acid biosynthesis; L-histidine biosynthesis; L-histidine from 5-phospho-alpha-D-ribose 1-diphosphate: step 5/9. Functionally, IGPS catalyzes the conversion of PRFAR and glutamine to IGP, AICAR and glutamate. The HisF subunit catalyzes the cyclization activity that produces IGP and AICAR from PRFAR using the ammonia provided by the HisH subunit. This Corynebacterium aurimucosum (strain ATCC 700975 / DSM 44827 / CIP 107346 / CN-1) (Corynebacterium nigricans) protein is Imidazole glycerol phosphate synthase subunit HisF.